Consider the following 425-residue polypeptide: Transmembrane protein 184A (425 aa).

Transmembrane regions (helical) follow at residues 51 to 71, 96 to 116, 133 to 153, 189 to 209, 226 to 246, 261 to 281, and 303 to 323; these read LFLT…TALL, LLFI…LLGG, FVIY…SAIM, TLQF…LQAF, VTLV…LFYF, FLTI…LAIL, and LAAG…SLAL. A disordered region spans residues 375–425; the sequence is QYTQQSTHEAPGPGQGGHPSPSTHPGPASGSGGGKKSRNIEKRMLIPSEDL. The span at 392-402 shows a compositional bias: low complexity; that stretch reads HPSPSTHPGPA.

It belongs to the TMEM184 family. As to expression, expressed in vascular cells (at protein level).

Its subcellular location is the cell membrane. The protein resides in the cytoplasm. The protein localises to the perinuclear region. It is found in the early endosome membrane. It localises to the endosome. Its subcellular location is the cytoplasmic vesicle. The protein resides in the secretory vesicle membrane. The protein localises to the cytoplasmic vesicle membrane. Its function is as follows. Acts as a heparin receptor in vascular cells. May be involved in vesicle transport in exocrine cells and Sertoli cells. This Rattus norvegicus (Rat) protein is Transmembrane protein 184A (Tmem184a).